The sequence spans 398 residues: Sphingosine 1-phosphate receptor 5 (398 aa).

Residues 1-40 lie on the Extracellular side of the membrane; that stretch reads MEPGLLRPAPVSEVIVLHYNYTGKLRGARYQPGAGLRADA. Residue Asn20 is glycosylated (N-linked (GlcNAc...) asparagine). Residues 41–61 form a helical membrane-spanning segment; that stretch reads VVCLAVCALIVLENLAVLVVL. Residues 62-70 lie on the Cytoplasmic side of the membrane; the sequence is GRHPRFHAP. The chain crosses the membrane as a helical span at residues 71–91; it reads MFLLLGSLTLSDLLAGAAYAA. At 92–111 the chain is on the extracellular side; it reads NILLSGPLTLRLSPALWFAR. A helical membrane pass occupies residues 112 to 132; that stretch reads EGGVFVALAASVLSLLAIALE. Topologically, residues 133–151 are cytoplasmic; the sequence is RLLTMERRGPAPAARRGRT. Residues 152–172 traverse the membrane as a helical segment; the sequence is LALAAGAWGVSLLLGLLPALG. Topologically, residues 173 to 191 are extracellular; it reads WNCLGRLEACSTVLPLYAK. The chain crosses the membrane as a helical span at residues 192-212; sequence AYVLFCVLAFVGILAAICGLY. At 213 to 252 the chain is on the cytoplasmic side; it reads ARIYCQVRAKAQRLRARPGAGEGTSARARGTPRSLALLRT. The helical transmembrane segment at 253 to 273 threads the bilayer; sequence LSVVLVAFVACWGPLFLLLLL. Over 274-287 the chain is Extracellular; it reads DVACPARACPVLLQ. The helical transmembrane segment at 288–308 threads the bilayer; sequence ADPFLGLAMANSLLNPIIYTF. Residues 309–398 are Cytoplasmic-facing; that stretch reads TNRDLRHALL…QTLVPPPAAD (90 aa). Cys323 carries the S-palmitoyl cysteine lipid modification. The interval 332-398 is disordered; that stretch reads SGTSRSPGST…QTLVPPPAAD (67 aa). A compositionally biased stretch (low complexity) spans 334–343; that stretch reads TSRSPGSTLG. Position 337 is a phosphoserine (Ser337). The span at 359–373 shows a compositional bias: basic and acidic residues; that stretch reads SSSRSERSSPQRDGL. Ser381 is subject to Phosphoserine.

It belongs to the G-protein coupled receptor 1 family.

The protein localises to the cell membrane. Functionally, receptor for the lysosphingolipid sphingosine 1-phosphate (S1P). S1P is a bioactive lysophospholipid that elicits diverse physiological effect on most types of cells and tissues. Is coupled to both the G(i/O)alpha and G(12) subclass of heteromeric G-proteins. The polypeptide is Sphingosine 1-phosphate receptor 5 (S1PR5) (Sus scrofa (Pig)).